Consider the following 649-residue polypeptide: Putative calpain-like cysteine protease A (649 aa).

A propeptide spanning residues 1 to 3 (MLT) is cleaved from the precursor. Disordered regions lie at residues 1-22 (MLTTESPTTTTTTTTTTTSSPS) and 124-193 (PLSN…SMPA). Residues 15-123 (TTTTSSPSSD…LHANGEAKWY (109 aa)) enclose the C2 domain. Positions 140–149 (ITNSNNKDNN) are enriched in low complexity. The segment covering 159–172 (AQEKGDEDQHHSAD) has biased composition (basic and acidic residues). Domain III regions lie at residues 458 to 489 (EGTYIVIPSTYDHGIEGAFHLTLFTDDKNATF) and 498 to 633 (EVEQ…ISLD).

The protein belongs to the peptidase C2 family. As to quaternary structure, monomer. Undergoes autolytic cleavage between Pro-192 and Ala-193.

The protein resides in the cytoplasm. It localises to the cytosol. Has a weak caseinolytic activity. The sequence is that of Putative calpain-like cysteine protease A (cplA) from Dictyostelium discoideum (Social amoeba).